Reading from the N-terminus, the 122-residue chain is Histone H2B, gonadal (122 aa).

The tract at residues 1 to 31 (MPPKPSGKGQKKAGKAKGAPRTDKKRRRKRK) is disordered. N,N-dimethylproline is present on proline 2. Serine 109 is a glycosylation site (O-linked (GlcNAc) serine). Lysine 117 is covalently cross-linked (Glycyl lysine isopeptide (Lys-Gly) (interchain with G-Cter in ubiquitin)).

This sequence belongs to the histone H2B family. In terms of assembly, the nucleosome is a histone octamer containing two molecules each of H2A, H2B, H3 and H4 assembled in one H3-H4 heterotetramer and two H2A-H2B heterodimers. The octamer wraps approximately 147 bp of DNA. Monoubiquitination of Lys-117 gives a specific tag for epigenetic transcriptional activation and is also prerequisite for histone H3 'Lys-4' and 'Lys-79' methylation. In terms of processing, glcNAcylation at Ser-109 promotes monoubiquitination of Lys-117. It fluctuates in response to extracellular glucose, and associates with transcribed genes.

It localises to the nucleus. The protein resides in the chromosome. Core component of nucleosome. Nucleosomes wrap and compact DNA into chromatin, limiting DNA accessibility to the cellular machineries which require DNA as a template. Histones thereby play a central role in transcription regulation, DNA repair, DNA replication and chromosomal stability. DNA accessibility is regulated via a complex set of post-translational modifications of histones, also called histone code, and nucleosome remodeling. The polypeptide is Histone H2B, gonadal (Asterias rubens (Common European starfish)).